Consider the following 1055-residue polypeptide: Ubiquitin carboxyl-terminal hydrolase 25 (1055 aa).

Residues 14–57 (QKHQQTFLNQLREITGINDTQILQQALKDSNGNLELAVAFLTAK) enclose the UBA-like domain. The tract at residues 77-102 (NDRYISVGSQADTNVIDLTGDDKDDL) is SUMO interaction domain (SIM). Ser-85 is modified (phosphoserine). Positions 89-95 (TNVIDLT) match the Required for SUMO paralog-specific binding motif. 2 consecutive UIM domains span residues 97–116 (DDKD…SNRA) and 123–140 (TDEE…IAEN). Residue Lys-99 forms a Glycyl lysine isopeptide (Lys-Gly) (interchain with G-Cter in SUMO); alternate linkage. A Glycyl lysine isopeptide (Lys-Gly) (interchain with G-Cter in ubiquitin); alternate cross-link involves residue Lys-99. The region spanning 169 to 657 (VGLKNVGNTC…SAYCLMYIND (489 aa)) is the USP domain. Cys-178 is a catalytic residue. The disordered stretch occupies residues 464 to 507 (VCTSPVDDIDASSPPSGSIPSQTLPSTTEQQGALSSELPSTSPS). Residues 476–496 (SPPSGSIPSQTLPSTTEQQGA) show a composition bias toward polar residues. The span at 497–507 (LSSELPSTSPS) shows a compositional bias: low complexity. A coiled-coil region spans residues 541-578 (TEEELSVLESCLHRWRTEIENDTRDLQESISRIHRTIE). Catalysis depends on residues His-599 and His-607. A coiled-coil region spans residues 684–717 (DLRDFVEEDNQRFEKELEEWDAQLAQKALQEKLL). Residues 727 to 749 (TSVTTAQAAGDPEYLEQPSRSDF) are disordered. Tyr-740 is subject to Phosphotyrosine.

Belongs to the peptidase C19 family. Homotetramer, inhibited form. Homodimer, active form. Interacts with ACTA1 (via its C-terminus); the interaction occurs for all isoforms but is strongest for isoform USP25m in muscle differentiating cells. Interacts (isoform USP25m only) with MYBPC1; the interaction prevents proteasomal degradation of MYBPC1. Interacts (isoform USP25m only) with FLNC (via filament repeats 17-18, 20-21 and 24). Interacts with GAPDH. Interacts with SUMO3; the interaction sumoylates efficiently USP25. Interacts with SUMO2; the interaction sumoylates efficiently USP25. Interacts with SUMO1; the interaction only weakly sumoylates USP25. Interacts with SYK; phosphorylates USP25 and regulates USP25 intracellular levels. In terms of processing, acetylated. Sumoylation impairs binding to and hydrolysis of ubiquitin chains. Sumoylated preferentially with SUMO2 or SUMO3. Desumoylated by SENP1. Polyubiquitinated by SMURF1 by promoting the 'Lys-48'-linkage leading to proteasomal degradation. Post-translationally, preferentially monoubiquitinated but can also be polyubiquitinated. Autodeubiquitinated. Ubiquitination activates the enzymatic activity either by preventing sumoylation or by allowing novel interactions. In terms of processing, phosphorylation in the C-terminal by SYK regulates USP25 cellular levels. In terms of tissue distribution, isoform USP25a is found in most adult and fetal tissues; expression is moderately high in testis, pancreas, kidney, skeletal muscle, liver, lung, placenta, heart, but very low in peripheral blood, colon, small intestine, ovary, prostate, thymus and spleen. Expressed in the brain, with high levels in the cerebral cortex. Isoform USP25b is found in all tissues except heart and skeletal muscle. Isoform USP25m is heart and skeletal muscle specific.

It localises to the cytoplasm. The protein resides in the nucleus. The enzyme catalyses Thiol-dependent hydrolysis of ester, thioester, amide, peptide and isopeptide bonds formed by the C-terminal Gly of ubiquitin (a 76-residue protein attached to proteins as an intracellular targeting signal).. In terms of biological role, deubiquitinating enzyme that hydrolyzes ubiquitin moieties conjugated to substrates and thus, functions in various biological processes including inflammation and immune response. Modulates the Wnt/beta-catenin pathway by deubiquitinating and stabilizing tankyrases TNKS1 and TNKS2. Regulates KEAP1-NRF2 axis in the defense against oxidative assaults by deubiquitinating KEAP1 and protecting it from degradation leading to degradation of the NRF2 transcription factor that is responsible for mounting an anti-oxidation gene expression program. Positively regulates RNA virus-induced innate signaling by interacting with and deubiquitinating ERLIN1 and ERLIN2. In turn, restricts virus production by regulating cholesterol biosynthetic flux. Acts as a negative regulator of interleukin-17-mediated signaling and inflammation through the removal of 'Lys-63'-linked ubiquitination of TRAF5 and TRAF6. Prevents the ubiquitination and degradation of TRAF3 to reduce the phosphorylation levels of JNK and P38, the secretion of IL-1B and to induce endotoxin tolerance. The muscle-specific isoform (USP25m) may have a role in the regulation of muscular differentiation and function. The protein is Ubiquitin carboxyl-terminal hydrolase 25 (USP25) of Homo sapiens (Human).